The primary structure comprises 138 residues: ATP synthase epsilon chain (138 aa).

Belongs to the ATPase epsilon chain family. In terms of assembly, F-type ATPases have 2 components, CF(1) - the catalytic core - and CF(0) - the membrane proton channel. CF(1) has five subunits: alpha(3), beta(3), gamma(1), delta(1), epsilon(1). CF(0) has three main subunits: a, b and c.

Its subcellular location is the cell inner membrane. Produces ATP from ADP in the presence of a proton gradient across the membrane. This Geobacter sulfurreducens (strain ATCC 51573 / DSM 12127 / PCA) protein is ATP synthase epsilon chain.